The sequence spans 117 residues: Large ribosomal subunit protein uL24 (117 aa).

Basic residues predominate over residues 1–10 (MSKQPRKQRK). The interval 1–28 (MSKQPRKQRKALYNAPAHARGKHMSATL) is disordered.

This sequence belongs to the universal ribosomal protein uL24 family. Part of the 50S ribosomal subunit.

Its function is as follows. One of two assembly initiator proteins, it binds directly to the 5'-end of the 23S rRNA, where it nucleates assembly of the 50S subunit. In terms of biological role, located at the polypeptide exit tunnel on the outside of the subunit. In Methanobrevibacter smithii (strain ATCC 35061 / DSM 861 / OCM 144 / PS), this protein is Large ribosomal subunit protein uL24.